The primary structure comprises 362 residues: Manganese peroxidase 3 (362 aa).

The signal sequence occupies residues 1-18; the sequence is MAFKQLLTAISIVSVANA. Residues 19-23 constitute a propeptide that is removed on maturation; it reads ALTRR. 4 disulfides stabilise this stretch: C26–C39, C38–C309, C58–C144, and C273–C338. Mn(2+)-binding residues include E60 and E64. H71 serves as the catalytic Proton acceptor. Residues D72, G90, D92, and S94 each coordinate Ca(2+). The N-linked (GlcNAc...) asparagine glycan is linked to N126. H200 is a heme b binding site. Ca(2+) is bound at residue T201. D206 contacts Mn(2+). Positions 218, 220, 223, and 225 each coordinate Ca(2+). Residues 341 to 362 are disordered; it reads TPFPSLSADPGPATSVAPVPPS.

Belongs to the peroxidase family. Ligninase subfamily. Heme b serves as cofactor. Ca(2+) is required as a cofactor.

It localises to the secreted. It carries out the reaction 2 Mn(2+) + H2O2 + 2 H(+) = 2 Mn(3+) + 2 H2O. Catalyzes the oxidation of Mn(2+) to Mn(3+). The latter, acting as a diffusible redox mediator, is capable of oxidizing a variety of lignin compounds. This isozyme is also able to oxidize phenols and amines in the absence of Mn(2+), similar to versatile peroxidases. This chain is Manganese peroxidase 3 (mnp3), found in Phlebia radiata (White-rot fungus).